Here is a 333-residue protein sequence, read N- to C-terminus: Glycerol-3-phosphate dehydrogenase [NAD(P)+] (333 aa).

S13, W14, R34, and K108 together coordinate NADPH. 3 residues coordinate sn-glycerol 3-phosphate: K108, G137, and S139. Residue A141 participates in NADPH binding. Residues K192, D245, S255, R256, and N257 each coordinate sn-glycerol 3-phosphate. The active-site Proton acceptor is the K192. R256 provides a ligand contact to NADPH. Residue E282 coordinates NADPH.

Belongs to the NAD-dependent glycerol-3-phosphate dehydrogenase family.

The protein resides in the cytoplasm. The catalysed reaction is sn-glycerol 3-phosphate + NAD(+) = dihydroxyacetone phosphate + NADH + H(+). It carries out the reaction sn-glycerol 3-phosphate + NADP(+) = dihydroxyacetone phosphate + NADPH + H(+). It participates in membrane lipid metabolism; glycerophospholipid metabolism. Its function is as follows. Catalyzes the reduction of the glycolytic intermediate dihydroxyacetone phosphate (DHAP) to sn-glycerol 3-phosphate (G3P), the key precursor for phospholipid synthesis. The sequence is that of Glycerol-3-phosphate dehydrogenase [NAD(P)+] from Thioalkalivibrio sulfidiphilus (strain HL-EbGR7).